The chain runs to 38 residues: Photosystem II reaction center protein L (38 aa).

A helical membrane pass occupies residues 17–37; the sequence is SLYWGLLLIFVLAVLFSNYFF.

The protein belongs to the PsbL family. As to quaternary structure, PSII is composed of 1 copy each of membrane proteins PsbA, PsbB, PsbC, PsbD, PsbE, PsbF, PsbH, PsbI, PsbJ, PsbK, PsbL, PsbM, PsbT, PsbX, PsbY, PsbZ, Psb30/Ycf12, at least 3 peripheral proteins of the oxygen-evolving complex and a large number of cofactors. It forms dimeric complexes.

It localises to the plastid. The protein resides in the chloroplast thylakoid membrane. In terms of biological role, one of the components of the core complex of photosystem II (PSII). PSII is a light-driven water:plastoquinone oxidoreductase that uses light energy to abstract electrons from H(2)O, generating O(2) and a proton gradient subsequently used for ATP formation. It consists of a core antenna complex that captures photons, and an electron transfer chain that converts photonic excitation into a charge separation. This subunit is found at the monomer-monomer interface and is required for correct PSII assembly and/or dimerization. This chain is Photosystem II reaction center protein L, found in Adiantum capillus-veneris (Maidenhair fern).